A 188-amino-acid chain; its full sequence is Ribosome-recycling factor (188 aa).

The protein belongs to the RRF family.

Its subcellular location is the cytoplasm. Functionally, responsible for the release of ribosomes from messenger RNA at the termination of protein biosynthesis. May increase the efficiency of translation by recycling ribosomes from one round of translation to another. This is Ribosome-recycling factor from Dinoroseobacter shibae (strain DSM 16493 / NCIMB 14021 / DFL 12).